We begin with the raw amino-acid sequence, 540 residues long: Chaperonin GroEL (540 aa).

ATP contacts are provided by residues 29–32, 86–90, Gly-413, 476–478, and Asp-492; these read TLGP, DGTTT, and NAA.

It belongs to the chaperonin (HSP60) family. As to quaternary structure, forms a cylinder of 14 subunits composed of two heptameric rings stacked back-to-back. Interacts with the co-chaperonin GroES.

Its subcellular location is the cytoplasm. It carries out the reaction ATP + H2O + a folded polypeptide = ADP + phosphate + an unfolded polypeptide.. In terms of biological role, together with its co-chaperonin GroES, plays an essential role in assisting protein folding. The GroEL-GroES system forms a nano-cage that allows encapsulation of the non-native substrate proteins and provides a physical environment optimized to promote and accelerate protein folding. In Streptococcus gordonii (strain Challis / ATCC 35105 / BCRC 15272 / CH1 / DL1 / V288), this protein is Chaperonin GroEL.